A 72-amino-acid polypeptide reads, in one-letter code: Large ribosomal subunit protein bL31 (72 aa).

Residues Cys-16, Cys-18, Cys-38, and Cys-41 each coordinate Zn(2+).

This sequence belongs to the bacterial ribosomal protein bL31 family. Type A subfamily. Part of the 50S ribosomal subunit. It depends on Zn(2+) as a cofactor.

Functionally, binds the 23S rRNA. The polypeptide is Large ribosomal subunit protein bL31 (Vibrio atlanticus (strain LGP32) (Vibrio splendidus (strain Mel32))).